A 274-amino-acid chain; its full sequence is Diaminopimelate epimerase (274 aa).

Asn11, Gln44, and Asn64 together coordinate substrate. The active-site Proton donor is the Cys73. Substrate is bound by residues Gly74–Asn75, Asn157, Asn190, and Glu208–Arg209. Cys217 serves as the catalytic Proton acceptor. Residue Gly218–Ser219 coordinates substrate.

It belongs to the diaminopimelate epimerase family. Homodimer.

Its subcellular location is the cytoplasm. It catalyses the reaction (2S,6S)-2,6-diaminopimelate = meso-2,6-diaminopimelate. It participates in amino-acid biosynthesis; L-lysine biosynthesis via DAP pathway; DL-2,6-diaminopimelate from LL-2,6-diaminopimelate: step 1/1. Its function is as follows. Catalyzes the stereoinversion of LL-2,6-diaminopimelate (L,L-DAP) to meso-diaminopimelate (meso-DAP), a precursor of L-lysine and an essential component of the bacterial peptidoglycan. The polypeptide is Diaminopimelate epimerase (Proteus mirabilis (strain HI4320)).